Reading from the N-terminus, the 747-residue chain is Pyrin (747 aa).

Positions 1–92 (MANTRVDHLL…AEELHKATGP (92 aa)) constitute a Pyrin domain. A disordered region spans residues 89-181 (ATGPEHLTEE…GARSAAPLYR (93 aa)). The span at 122-135 (PGEDEAQQNDDESD) shows a compositional bias: acidic residues. Cys442, His445, Cys465, and His471 together coordinate Zn(2+). The segment at 442–479 (CPRHMKQVQLLFCEDHREPICLICRLSQEHQGHRVRPI) adopts a B box-type zinc-finger fold. A coiled-coil region spans residues 479-508 (IEEAALQYKEQIRKQLERLREMRGYVEEHK). A required for homotrimerization and induction of pyroptosomes region spans residues 487–645 (KEQIRKQLER…RFSEMLGSEM (159 aa)). The tract at residues 698 to 720 (EPQDYLHPSSAQDTPELHEIHSQ) is disordered.

Homotrimer. Interacts (via the B box-type zinc finger) with PSTPIP1. Interacts (via the B30.2/SPRY domain) with several components of the inflammasome complex, including CASP1 p20 and p10 subunits, CASP5, PYCARD, NLRP1, NLRP2 and NLRP3, as well as with unprocessed IL1B; this interaction may lead to autophagic degradation of these proteins. Component of the AIM2 PANoptosome complex, a multiprotein complex that drives inflammatory cell death (PANoptosis). Interacts with NFKBIA and RELA. Interacts weakly with VASP and ACTR3. Interacts with active ULK1 (phosphorylated on 'Ser-317') and BECN1 simultaneously. Also interacts with ATG16L1 (via WD repeats), and with ATG8 family members, including GABARAP, GABARAPL1 and, to a lesser extent, GABARAPL2, MAP1LC3A/LC3A and MAP1LC3C/LC3C. Interacts with TRIM21. Interacts with YWHAB, YWHAE, YWHAG, YWHAH, YWHAQ and YWHAZ; the interaction is required for the down-regulation of pyrin pro-inflammatory activity. In terms of processing, degraded along with the delivery of its substrates to autolysosomal compartments (at protein level). In terms of tissue distribution, expressed in spleen and, to a lesser degree in the lung. Not expressed in thymus, testis, ovary, heart, brain, liver, kidney and muscle.

It is found in the cytoplasm. The protein resides in the cytoskeleton. It localises to the cell projection. Its subcellular location is the ruffle. The protein localises to the lamellipodium. It is found in the cytoplasmic vesicle. The protein resides in the autophagosome. It localises to the nucleus. Involved in the regulation of innate immunity and the inflammatory response in response to IFNG/IFN-gamma. Organizes autophagic machinery by serving as a platform for the assembly of ULK1, Beclin 1/BECN1, ATG16L1, and ATG8 family members and recognizes specific autophagy targets, thus coordinating target recognition with assembly of the autophagic apparatus and initiation of autophagy. Acts as an autophagy receptor for the degradation of several inflammasome components, including CASP1, NLRP1 and NLRP3, hence preventing excessive IL1B- and IL18-mediated inflammation. However, it can also have a positive effect in the inflammatory pathway, acting as an innate immune sensor that triggers PYCARD/ASC specks formation, caspase-1 activation, and IL1B and IL18 production. Together with AIM2, also acts as a mediator of pyroptosis, necroptosis and apoptosis (PANoptosis), an integral part of host defense against pathogens, in response to bacterial infection. It is required for PSTPIP1-induced PYCARD/ASC oligomerization and inflammasome formation. Recruits PSTPIP1 to inflammasomes, and is required for PSTPIP1 oligomerization. This is Pyrin from Rattus norvegicus (Rat).